We begin with the raw amino-acid sequence, 318 residues long: MTKYRIITFDGGGTLGALSLQLLNRLAYQNPKLISETNVFSGNSIGSFTALALASGRSPEETFDFFKDQILPAFSVSRPGGPVFNQQVPYSGLIKAIRTFFPRDLRLRDLKKRIVVPAFHLFAPELNRWNPVLFHNFLGSPYLNEKASDVILRSSAAPATQRAYQNYVDGYTVATNTSTASIAFAVGKAKQPLDQIAVLSIGTGEQPTQLRRDTKGWGMVSADNILPEDMEDLPPNWGVLLDRSPNEPLLPFLQIISGGSSYYESMVSSELLGDQFFRLNPRIPNFSKTDPSVVPALISIANKTNLRPAFQFIERNWN.

One can recognise a PNPLA domain in the interval 7 to 182 (ITFDGGGTLG…VATNTSTASI (176 aa)). The GXGXXG motif lies at 11–16 (GGGTLG). Residues 42–46 (GNSIG) carry the GXSXG motif. Residue S44 is the Nucleophile of the active site. Residue D169 is the Proton acceptor of the active site.

Probable lipid hydrolase. The chain is Protein teg (teg) from Priestia megaterium (strain ATCC 14581 / DSM 32 / CCUG 1817 / JCM 2506 / NBRC 15308 / NCIMB 9376 / NCTC 10342 / NRRL B-14308 / VKM B-512 / Ford 19) (Bacillus megaterium).